The sequence spans 1383 residues: DNA-directed RNA polymerase subunit beta (1383 aa).

This sequence belongs to the RNA polymerase beta chain family. The RNAP catalytic core consists of 2 alpha, 1 beta, 1 beta' and 1 omega subunit. When a sigma factor is associated with the core the holoenzyme is formed, which can initiate transcription.

The catalysed reaction is RNA(n) + a ribonucleoside 5'-triphosphate = RNA(n+1) + diphosphate. Its function is as follows. DNA-dependent RNA polymerase catalyzes the transcription of DNA into RNA using the four ribonucleoside triphosphates as substrates. In Xanthomonas oryzae pv. oryzae (strain MAFF 311018), this protein is DNA-directed RNA polymerase subunit beta.